The primary structure comprises 435 residues: D-inositol 3-phosphate glycosyltransferase (435 aa).

H25 provides a ligand contact to 1D-myo-inositol 3-phosphate. Residues 31 to 32 (QP) and G39 each bind UDP-N-acetyl-alpha-D-glucosamine. 1D-myo-inositol 3-phosphate contacts are provided by residues 36-41 (DAGGMN), K94, Y127, T151, and R171. R245 and K250 together coordinate UDP-N-acetyl-alpha-D-glucosamine. Mg(2+) is bound by residues Y320, R321, and A323. Residues E333 and E341 each coordinate UDP-N-acetyl-alpha-D-glucosamine. T347 provides a ligand contact to Mg(2+).

Belongs to the glycosyltransferase group 1 family. MshA subfamily. Homodimer.

The catalysed reaction is 1D-myo-inositol 3-phosphate + UDP-N-acetyl-alpha-D-glucosamine = 1D-myo-inositol 2-acetamido-2-deoxy-alpha-D-glucopyranoside 3-phosphate + UDP + H(+). Functionally, catalyzes the transfer of a N-acetyl-glucosamine moiety to 1D-myo-inositol 3-phosphate to produce 1D-myo-inositol 2-acetamido-2-deoxy-glucopyranoside 3-phosphate in the mycothiol biosynthesis pathway. The polypeptide is D-inositol 3-phosphate glycosyltransferase (Streptosporangium roseum (strain ATCC 12428 / DSM 43021 / JCM 3005 / KCTC 9067 / NCIMB 10171 / NRRL 2505 / NI 9100)).